The chain runs to 124 residues: MSIDQKKLVDITNSIREMTITNVLDLISIMEKEFGVSAAAAVAVAAAPAEAVEEKTEFDVILKSFGENKVAVIKAVRGATGLGLKEAKELVEAAPKNVKEGINKEEAESLKKTLEEAGADVDIK.

Belongs to the bacterial ribosomal protein bL12 family. In terms of assembly, homodimer. Part of the ribosomal stalk of the 50S ribosomal subunit. Forms a multimeric L10(L12)X complex, where L10 forms an elongated spine to which 2 to 4 L12 dimers bind in a sequential fashion. Binds GTP-bound translation factors.

Its function is as follows. Forms part of the ribosomal stalk which helps the ribosome interact with GTP-bound translation factors. Is thus essential for accurate translation. In Hamiltonella defensa subsp. Acyrthosiphon pisum (strain 5AT), this protein is Large ribosomal subunit protein bL12.